We begin with the raw amino-acid sequence, 212 residues long: Pyrrolidone-carboxylate peptidase (212 aa).

Catalysis depends on residues Glu-78, Cys-141, and His-165.

Belongs to the peptidase C15 family. In terms of assembly, homotetramer.

The protein resides in the cytoplasm. The catalysed reaction is Release of an N-terminal pyroglutamyl group from a polypeptide, the second amino acid generally not being Pro.. Functionally, removes 5-oxoproline from various penultimate amino acid residues except L-proline. The sequence is that of Pyrrolidone-carboxylate peptidase from Staphylococcus aureus (strain Mu3 / ATCC 700698).